Here is a 156-residue protein sequence, read N- to C-terminus: Small ribosomal subunit protein uS7 (156 aa).

Belongs to the universal ribosomal protein uS7 family. As to quaternary structure, part of the 30S ribosomal subunit. Contacts proteins S9 and S11.

Its function is as follows. One of the primary rRNA binding proteins, it binds directly to 16S rRNA where it nucleates assembly of the head domain of the 30S subunit. Is located at the subunit interface close to the decoding center, probably blocks exit of the E-site tRNA. The polypeptide is Small ribosomal subunit protein uS7 (Roseobacter denitrificans (strain ATCC 33942 / OCh 114) (Erythrobacter sp. (strain OCh 114))).